A 161-amino-acid chain; its full sequence is Phosphopantetheine adenylyltransferase (161 aa).

Residue Ser-9 coordinates substrate. Residues 9 to 10 and His-17 contribute to the ATP site; that span reads SF. Lys-41, Thr-73, and Arg-87 together coordinate substrate. Residues 88–90, Glu-98, and 123–129 each bind ATP; these read GIR and YQYVSSS.

The protein belongs to the bacterial CoaD family. As to quaternary structure, homohexamer. Mg(2+) serves as cofactor.

It localises to the cytoplasm. It catalyses the reaction (R)-4'-phosphopantetheine + ATP + H(+) = 3'-dephospho-CoA + diphosphate. It functions in the pathway cofactor biosynthesis; coenzyme A biosynthesis; CoA from (R)-pantothenate: step 4/5. Its function is as follows. Reversibly transfers an adenylyl group from ATP to 4'-phosphopantetheine, yielding dephospho-CoA (dPCoA) and pyrophosphate. The protein is Phosphopantetheine adenylyltransferase of Levilactobacillus brevis (strain ATCC 367 / BCRC 12310 / CIP 105137 / JCM 1170 / LMG 11437 / NCIMB 947 / NCTC 947) (Lactobacillus brevis).